Consider the following 259-residue polypeptide: Flagellar L-ring protein 1 (259 aa).

A signal peptide spans 1 to 15; that stretch reads MKRICLLALITTMSG. The N-palmitoyl cysteine moiety is linked to residue cysteine 16. The S-diacylglycerol cysteine moiety is linked to residue cysteine 16. The tract at residues 38-63 is disordered; it reads EGDKSKDESSGIVDTLRGRNDPVAGD.

This sequence belongs to the FlgH family. The basal body constitutes a major portion of the flagellar organelle and consists of four rings (L,P,S, and M) mounted on a central rod.

Its subcellular location is the cell outer membrane. The protein resides in the bacterial flagellum basal body. In terms of biological role, assembles around the rod to form the L-ring and probably protects the motor/basal body from shearing forces during rotation. In Vibrio parahaemolyticus serotype O3:K6 (strain RIMD 2210633), this protein is Flagellar L-ring protein 1 (flgH1).